Here is a 349-residue protein sequence, read N- to C-terminus: Micronemal protein 6 (349 aa).

Positions 1-23 are cleaved as a signal peptide; sequence MRLFRCCAAAVVAAESLLWLKNG. EGF-like domains lie at 36–80, 96–134, and 147–192; these read IADN…VTCM, TPAA…SLDG, and GCEE…ITCK. 9 disulfide bridges follow: C40–C53, C45–C62, C64–C79, C100–C113, C105–C122, C124–C140, C148–C162, C153–C173, and C175–C191. Residues 194–291 are disordered; that stretch reads VPPHYRKPPF…EEGSGHAGAI (98 aa). Positions 204–283 are acidic domain; sequence EFGKGGHPVD…SEEQGKEREE (80 aa). 2 stretches are compositionally biased toward basic and acidic residues: residues 210 to 247 and 276 to 285; these read HPVD…RTPL and EQGKEREEGS. The helical transmembrane segment at 290 to 310 threads the bilayer; the sequence is AIAGGVIGGLLLLSAAGAGVA.

Interacts directly with MIC1. Part of the MIC6-MIC1-MIC4 complex. Post-translationally, subject to proteolytic processing involving both the N-terminus and the C-terminus. The first EGF-like domain (EGF-like domain 1) is removed by proteolytic cleavage by ASP3 and is not present in the mature protein. Released as soluble 35 kDa protein after proteolytic processing at the C-terminus.

It localises to the cytoplasmic vesicle. The protein localises to the secretory vesicle. Its subcellular location is the microneme membrane. It is found in the secreted. Its function is as follows. Escorter protein required for import of MIC1 and MIC4 adhesins into the microneme. The polypeptide is Micronemal protein 6 (Toxoplasma gondii).